A 394-amino-acid polypeptide reads, in one-letter code: 1-deoxy-D-xylulose 5-phosphate reductoisomerase (394 aa).

NADPH contacts are provided by threonine 12, glycine 13, serine 14, isoleucine 15, lysine 39, glutamine 40, and asparagine 126. Residue lysine 127 coordinates 1-deoxy-D-xylulose 5-phosphate. Residue glutamate 128 participates in NADPH binding. Aspartate 152 contacts Mn(2+). 4 residues coordinate 1-deoxy-D-xylulose 5-phosphate: serine 153, glutamate 154, serine 183, and histidine 206. Mn(2+) is bound at residue glutamate 154. NADPH is bound at residue glycine 212. Serine 219, asparagine 224, lysine 225, and glutamate 228 together coordinate 1-deoxy-D-xylulose 5-phosphate. Glutamate 228 serves as a coordination point for Mn(2+).

It belongs to the DXR family. Mg(2+) serves as cofactor. Mn(2+) is required as a cofactor.

It carries out the reaction 2-C-methyl-D-erythritol 4-phosphate + NADP(+) = 1-deoxy-D-xylulose 5-phosphate + NADPH + H(+). It participates in isoprenoid biosynthesis; isopentenyl diphosphate biosynthesis via DXP pathway; isopentenyl diphosphate from 1-deoxy-D-xylulose 5-phosphate: step 1/6. Its function is as follows. Catalyzes the NADPH-dependent rearrangement and reduction of 1-deoxy-D-xylulose-5-phosphate (DXP) to 2-C-methyl-D-erythritol 4-phosphate (MEP). The chain is 1-deoxy-D-xylulose 5-phosphate reductoisomerase from Neisseria gonorrhoeae (strain ATCC 700825 / FA 1090).